The sequence spans 617 residues: Dihydroxy-acid dehydratase (617 aa).

Aspartate 81 is a Mg(2+) binding site. Cysteine 122 lines the [2Fe-2S] cluster pocket. Residues aspartate 123 and lysine 124 each coordinate Mg(2+). Lysine 124 is modified (N6-carboxylysine). Cysteine 195 contributes to the [2Fe-2S] cluster binding site. Glutamate 491 lines the Mg(2+) pocket. Serine 517 acts as the Proton acceptor in catalysis.

Belongs to the IlvD/Edd family. Homodimer. It depends on [2Fe-2S] cluster as a cofactor. Mg(2+) is required as a cofactor.

It carries out the reaction (2R)-2,3-dihydroxy-3-methylbutanoate = 3-methyl-2-oxobutanoate + H2O. It catalyses the reaction (2R,3R)-2,3-dihydroxy-3-methylpentanoate = (S)-3-methyl-2-oxopentanoate + H2O. It functions in the pathway amino-acid biosynthesis; L-isoleucine biosynthesis; L-isoleucine from 2-oxobutanoate: step 3/4. It participates in amino-acid biosynthesis; L-valine biosynthesis; L-valine from pyruvate: step 3/4. Functions in the biosynthesis of branched-chain amino acids. Catalyzes the dehydration of (2R,3R)-2,3-dihydroxy-3-methylpentanoate (2,3-dihydroxy-3-methylvalerate) into 2-oxo-3-methylpentanoate (2-oxo-3-methylvalerate) and of (2R)-2,3-dihydroxy-3-methylbutanoate (2,3-dihydroxyisovalerate) into 2-oxo-3-methylbutanoate (2-oxoisovalerate), the penultimate precursor to L-isoleucine and L-valine, respectively. This Buchnera aphidicola subsp. Schizaphis graminum (strain Sg) protein is Dihydroxy-acid dehydratase.